The following is a 711-amino-acid chain: Far upstream element-binding protein 2 (711 aa).

A disordered region spans residues 1–147; sequence MSDYSTGGPP…HPPPRTSMTE (147 aa). Residue serine 2 is modified to N-acetylserine. Positions 8-17 are enriched in pro residues; it reads GPPPGPPPPA. Gly residues-rich tracts occupy residues 18-28 and 36-68; these read GGGGGAGGAGG and GAGDRGGGGPGGGGPGGGSAGGPSQPPGGGGPG. At arginine 40 the chain carries Omega-N-methylarginine. An N6-acetyllysine modification is found at lysine 87. Serine 99 is subject to Phosphoserine. A Phosphothreonine modification is found at threonine 100. Positions 110-122 are enriched in basic and acidic residues; that stretch reads RQLEDGDQPESKK. Lysine 121 is covalently cross-linked (Glycyl lysine isopeptide (Lys-Gly) (interchain with G-Cter in SUMO1); alternate). A Glycyl lysine isopeptide (Lys-Gly) (interchain with G-Cter in SUMO2); alternate cross-link involves residue lysine 121. Serine 125, serine 129, serine 131, serine 181, serine 184, serine 193, and serine 274 each carry phosphoserine. 3 KH domains span residues 144–208, 233–299, and 322–386; these read SMTE…KMML, GTVQ…CEMV, and GGGI…ARII. Residues 392 to 429 are disordered; it reads SLRSGPPGPPGGPGMPPGGRGRGRGQGNWGPPGGEMTF. Over residues 397–407 the composition is skewed to pro residues; sequence PPGPPGGPGMP. The segment covering 408–424 has biased composition (gly residues); that stretch reads PGGRGRGRGQGNWGPPG. Arginine 411, arginine 413, arginine 415, and arginine 442 each carry omega-N-methylarginine. One can recognise a KH 4 domain in the interval 424–491; that stretch reads GGEMTFSIPT…QQIDHAKQLI (68 aa). At serine 480 the chain carries Phosphoserine. A disordered region spans residues 497-569; that stretch reads GPLCPVGPGP…HDPSKAAAAA (73 aa). Composition is skewed to pro residues over residues 501–520 and 528–542; these read PVGPGPGGPGPAGPMGPFNP and PGAPPHAGGPPPHQY. Repeat unit 1 spans residues 571-582; that stretch reads DPNAAWAAYYSH. The segment at 571–684 is 4 X 12 AA imperfect repeats; it reads DPNAAWAAYY…SAAWAEYYRQ (114 aa). Residues 583-711 are disordered; sequence YYQQPPGPVP…PTQQGQQQAQ (129 aa). Positions 587 to 613 are enriched in pro residues; that stretch reads PPGPVPGPAPAPAAPPAQGEPPQPPPT. Repeat copies occupy residues 617 to 628, 643 to 654, and 673 to 684.

The protein belongs to the KHSRP family. In terms of assembly, part of a ternary complex containing FUBP2, PTBP1, PTBP2 and HNRPH1. Interacts with PARN. Interacts with PQBP1. In terms of processing, phosphorylation at Ser-193 leads to the unfolding of the unstable KH domain 1, creating a site for 14-3-3 YWHAZ binding, which promotes nuclear localization and impairs the RNA degradation function. Detected in neural and non-neural cell lines.

The protein resides in the nucleus. The protein localises to the cytoplasm. Binds to the dendritic targeting element and may play a role in mRNA trafficking. Part of a ternary complex that binds to the downstream control sequence (DCS) of the pre-mRNA. Mediates exon inclusion in transcripts that are subject to tissue-specific alternative splicing. May interact with single-stranded DNA from the far-upstream element (FUSE). May activate gene expression. Also involved in degradation of inherently unstable mRNAs that contain AU-rich elements (AREs) in their 3'-UTR, possibly by recruiting degradation machinery to ARE-containing mRNAs. The polypeptide is Far upstream element-binding protein 2 (KHSRP) (Homo sapiens (Human)).